Here is a 183-residue protein sequence, read N- to C-terminus: Peptide deformylase (183 aa).

Fe cation contacts are provided by Cys-111 and His-154. The active site involves Glu-155. His-158 serves as a coordination point for Fe cation.

It belongs to the polypeptide deformylase family. Fe(2+) serves as cofactor.

It catalyses the reaction N-terminal N-formyl-L-methionyl-[peptide] + H2O = N-terminal L-methionyl-[peptide] + formate. Removes the formyl group from the N-terminal Met of newly synthesized proteins. Requires at least a dipeptide for an efficient rate of reaction. N-terminal L-methionine is a prerequisite for activity but the enzyme has broad specificity at other positions. In Staphylococcus aureus (strain COL), this protein is Peptide deformylase.